The sequence spans 214 residues: Adenylate kinase (214 aa).

Residue 10–15 (GAGKGT) coordinates ATP. The interval 30–59 (STGDMLRAAIKAGTELGKQAKSVIDAGQLV) is NMP. AMP-binding positions include Thr-31, Arg-36, 57 to 59 (QLV), 85 to 88 (GFPR), and Gln-92. Residues 122–159 (GRRAHLPSGRTYHVVYNPPKEEGKDDETGEPLVIREDD) form an LID region. ATP contacts are provided by residues Arg-123 and 132-133 (TY). AMP is bound by residues Arg-156 and Arg-167. Position 200 (Lys-200) interacts with ATP.

Belongs to the adenylate kinase family. As to quaternary structure, monomer.

The protein localises to the cytoplasm. It catalyses the reaction AMP + ATP = 2 ADP. It functions in the pathway purine metabolism; AMP biosynthesis via salvage pathway; AMP from ADP: step 1/1. Functionally, catalyzes the reversible transfer of the terminal phosphate group between ATP and AMP. Plays an important role in cellular energy homeostasis and in adenine nucleotide metabolism. The sequence is that of Adenylate kinase from Aliivibrio fischeri (strain ATCC 700601 / ES114) (Vibrio fischeri).